Here is a 115-residue protein sequence, read N- to C-terminus: Protein translation factor SUI1 homolog (115 aa).

Belongs to the SUI1 family.

In terms of biological role, probably involved in translation. The polypeptide is Protein translation factor SUI1 homolog (TIF) (Zea mays (Maize)).